The primary structure comprises 198 residues: Dephospho-CoA kinase (198 aa).

In terms of domain architecture, DPCK spans 3 to 198 (LIGLTGGIAS…VDALWAGLRG (196 aa)). An ATP-binding site is contributed by 11 to 16 (ASGKST).

Belongs to the CoaE family.

The protein resides in the cytoplasm. The catalysed reaction is 3'-dephospho-CoA + ATP = ADP + CoA + H(+). It functions in the pathway cofactor biosynthesis; coenzyme A biosynthesis; CoA from (R)-pantothenate: step 5/5. Catalyzes the phosphorylation of the 3'-hydroxyl group of dephosphocoenzyme A to form coenzyme A. The chain is Dephospho-CoA kinase from Leifsonia xyli subsp. xyli (strain CTCB07).